We begin with the raw amino-acid sequence, 500 residues long: Lysine--tRNA ligase (500 aa).

The Mg(2+) site is built by Glu410 and Glu417.

This sequence belongs to the class-II aminoacyl-tRNA synthetase family. In terms of assembly, homodimer. It depends on Mg(2+) as a cofactor.

The protein localises to the cytoplasm. The catalysed reaction is tRNA(Lys) + L-lysine + ATP = L-lysyl-tRNA(Lys) + AMP + diphosphate. The sequence is that of Lysine--tRNA ligase from Pseudomonas entomophila (strain L48).